Consider the following 84-residue polypeptide: Large ribosomal subunit protein bL27 (84 aa).

Residues 1-22 (MAHKKAGGSTRNGRDSESKRLG) are disordered.

The protein belongs to the bacterial ribosomal protein bL27 family.

The chain is Large ribosomal subunit protein bL27 from Shewanella amazonensis (strain ATCC BAA-1098 / SB2B).